A 1294-amino-acid polypeptide reads, in one-letter code: uncharacterized protein (1294 aa).

This is an uncharacterized protein from Schizosaccharomyces pombe (strain 972 / ATCC 24843) (Fission yeast).